Here is a 912-residue protein sequence, read N- to C-terminus: Tiger protein E1 (912 aa).

An N-terminal signal peptide occupies residues 1 to 22; sequence MKLKHLTIFLFIFIYRFLFVKS. Residues 23–815 are Extracellular-facing; the sequence is DCYLINNERP…YSENKSSGFP (793 aa). N-linked (GlcNAc...) asparagine glycosylation is found at asparagine 54, asparagine 108, asparagine 164, asparagine 183, asparagine 232, asparagine 268, asparagine 323, asparagine 356, asparagine 398, asparagine 407, asparagine 568, asparagine 637, asparagine 653, asparagine 658, asparagine 706, asparagine 716, asparagine 763, asparagine 774, asparagine 781, and asparagine 809. 2 IPT/TIG domains span residues 532-609 and 612-686; these read SSDQ…GPFT and PVIE…PLII. Residues 715-796 enclose the IPT/TIG 3 domain; it reads TNTSDIDQTA…DGQYFIAQIF (82 aa). Residues 816-836 traverse the membrane as a helical segment; it reads NEMYIGIVAIIIFLALIFFAI. Topologically, residues 837 to 912 are cytoplasmic; it reads KTQVEKYIEE…IRCCFKEHTD (76 aa).

The protein localises to the cell membrane. The sequence is that of Tiger protein E1 (tgrE1) from Dictyostelium discoideum (Social amoeba).